We begin with the raw amino-acid sequence, 772 residues long: Mitochondrial intermediate peptidase (772 aa).

Residues methionine 1–leucine 42 constitute a mitochondrion transit peptide. A Zn(2+)-binding site is contributed by histidine 556. Residue glutamate 557 is part of the active site. Zn(2+) is bound by residues histidine 560 and histidine 563.

The protein belongs to the peptidase M3 family. Requires Zn(2+) as cofactor.

The protein localises to the mitochondrion matrix. The catalysed reaction is Release of an N-terminal octapeptide as second stage of processing of some proteins imported into the mitochondrion.. Its function is as follows. Cleaves proteins, imported into the mitochondrion, to their mature size. While most mitochondrial precursor proteins are processed to the mature form in one step by mitochondrial processing peptidase (MPP), the sequential cleavage by MIP of an octapeptide after initial processing by MPP is a required step for a subgroup of nuclear-encoded precursor proteins destined for the matrix or the inner membrane. The chain is Mitochondrial intermediate peptidase (OCT1) from Laccaria bicolor (strain S238N-H82 / ATCC MYA-4686) (Bicoloured deceiver).